The chain runs to 136 residues: uncharacterized protein (136 aa).

The chain crosses the membrane as a helical span at residues 102 to 118; it reads FVIVFFFFSFSLSISCV.

The protein resides in the membrane. This is an uncharacterized protein from Saccharomyces cerevisiae (strain ATCC 204508 / S288c) (Baker's yeast).